A 460-amino-acid polypeptide reads, in one-letter code: Armadillo repeat-containing protein LFR (460 aa).

Over residues 1–10 the composition is skewed to low complexity; that stretch reads MSHVRSAPAG. Positions 1 to 32 are disordered; it reads MSHVRSAPAGKSGGGGGSTPAKRGRPFGSTTG. ARM repeat units follow at residues 225–267, 321–360, and 364–405; these read ENET…NLAP, NEPF…NVAE, and DFRL…SLVS.

As to quaternary structure, interacts with CHR719, SWI3A and SWI3C. In terms of tissue distribution, expressed at low levels in coleoptiles, leaf tongues, mature leaves and nodes during the vegetative phase. Highly expressed in reproductive tissues such as young panicles, early developing seeds, embryos and endosperms.

The protein resides in the nucleus. Its function is as follows. Plays critical roles in both embryo and endosperm development. Required for free nuclei division and cellularization in early endosperm development, by preventing premature cell death in the endosperm. Involved in the regulation of pattern formation and organ differentiation during embryogenesis, by regulating genes involved in the early stages of seed development. The protein is Armadillo repeat-containing protein LFR of Oryza sativa subsp. japonica (Rice).